The sequence spans 320 residues: Protoheme IX farnesyltransferase 1 (320 aa).

The next 9 membrane-spanning stretches (helical) occupy residues 34 to 54, 58 to 78, 112 to 132, 135 to 155, 160 to 180, 189 to 209, 234 to 254, 255 to 275, and 299 to 319; these read GIIISNSIAAFGGFWIAFASA, LTGLAFLMTMVTAMLGTAFVM, AMILTYGSVLGIAGLAMLYSL, LTAFLGLAAFIFYAIIYTVWV, VWSTFVGSFPGAAPPLMGYCA, AVLLYTIMFLWQPPHFWAIGI, IKMMQYIAVLVPVTLLFPFSL, GTGHISPFYFLAALVLGGIWI, and LIYFCLLFFIMMIDSFMMFLI.

The protein belongs to the UbiA prenyltransferase family. Protoheme IX farnesyltransferase subfamily. Interacts with CtaA.

It is found in the cell membrane. It catalyses the reaction heme b + (2E,6E)-farnesyl diphosphate + H2O = Fe(II)-heme o + diphosphate. The protein operates within porphyrin-containing compound metabolism; heme O biosynthesis; heme O from protoheme: step 1/1. In terms of biological role, converts heme B (protoheme IX) to heme O by substitution of the vinyl group on carbon 2 of heme B porphyrin ring with a hydroxyethyl farnesyl side group. This chain is Protoheme IX farnesyltransferase 1 (ctaB1), found in Bacillus subtilis (strain 168).